Consider the following 229-residue polypeptide: UPF0173 metal-dependent hydrolase SAR1785 (229 aa).

Belongs to the UPF0173 family.

The sequence is that of UPF0173 metal-dependent hydrolase SAR1785 from Staphylococcus aureus (strain MRSA252).